Here is a 418-residue protein sequence, read N- to C-terminus: Sialidase-3 (418 aa).

The short motif at 24–27 (YRIP) is the FRIP motif element. Substrate is bound by residues Arg-25 and Arg-45. The active-site Proton acceptor is the Asp-50. Residues 129–140 (LYSEDSGCSWGE) form a BNR 1 repeat. The substrate site is built by Tyr-179 and Tyr-181. A BNR 2 repeat occupies 201-212 (FYSDDLGVTWHC). Residues Glu-223 and Arg-243 each coordinate substrate. A BNR 3 repeat occupies 252 to 263 (AFSTDSGDCFQK). Arg-339 serves as a coordination point for substrate. Tyr-369 functions as the Nucleophile in the catalytic mechanism. Glu-386 is a catalytic residue.

It belongs to the glycosyl hydrolase 33 family. As to quaternary structure, interacts with CAV1; this interaction enhances NEU3 sialidase activity within caveola. Interacts with EGFR; this interaction mediates desialylation of EGFR enhancing downstream signaling. Palmitoylated; may regulate intracellular trafficking and anchorage to plasma membrane and endomembranes. Expressed in brain, cardiac muscle and weakly in liver.

It localises to the cell membrane. The protein localises to the membrane. The protein resides in the caveola. Its subcellular location is the early endosome membrane. It is found in the recycling endosome membrane. It localises to the lysosome membrane. It carries out the reaction Hydrolysis of alpha-(2-&gt;3)-, alpha-(2-&gt;6)-, alpha-(2-&gt;8)- glycosidic linkages of terminal sialic acid residues in oligosaccharides, glycoproteins, glycolipids, colominic acid and synthetic substrates.. The catalysed reaction is a ganglioside GD1a + H2O = a ganglioside GM1 + N-acetylneuraminate. It catalyses the reaction a ganglioside GD1a (d18:1(4E)) + H2O = a ganglioside GM1 (d18:1(4E)) + N-acetylneuraminate. The enzyme catalyses a ganglioside GD1b + H2O = a ganglioside GM1 + N-acetylneuraminate. It carries out the reaction a ganglioside GD1b (d18:1(4E)) + H2O = a ganglioside GM1 (d18:1(4E)) + N-acetylneuraminate. The catalysed reaction is a ganglioside GD3 + H2O = a ganglioside GM3 + N-acetylneuraminate. It catalyses the reaction a ganglioside GD3 (d18:1(4E)) + H2O = a ganglioside GM3 (d18:1(4E)) + N-acetylneuraminate. The enzyme catalyses a ganglioside GM3 + H2O = a beta-D-galactosyl-(1-&gt;4)-beta-D-glucosyl-(1&lt;-&gt;1)-ceramide + N-acetylneuraminate. It carries out the reaction a ganglioside GM1 + H2O = a ganglioside GA1 + N-acetylneuraminate. The catalysed reaction is a ganglioside GM1 (d18:1(4E)) + H2O = a ganglioside GA1 (d18:1(4E)) + N-acetylneuraminate. It catalyses the reaction a ganglioside GM2 (d18:1(4E)) + H2O = a ganglioside GA2 (d18:1(4E)) + N-acetylneuraminate. The enzyme catalyses a ganglioside GM3 (d18:1(4E)) + H2O = a beta-D-Gal-(1-&gt;4)-beta-D-Glc-(1&lt;-&gt;1)-Cer(d18:1(4E)) + N-acetylneuraminate. It carries out the reaction a ganglioside GT1b + H2O = a ganglioside GD1b + N-acetylneuraminate. In terms of biological role, exo-alpha-sialidase that catalyzes the hydrolytic cleavage of the terminal sialic acid (N-acetylneuraminic acid, Neu5Ac) of a glycan moiety in the catabolism of glycolipids, glycoproteins and oligosacharides. Displays high catalytic efficiency for gangliosides including alpha-(2-&gt;3)-sialylated GD1a and GM3 and alpha-(2-&gt;8)-sialylated GD3. Plays a role in the regulation of transmembrane signaling through the modulation of ganglioside content of the lipid bilayer and by direct interaction with signaling receptors, such as EGFR. Desialylates EGFR and activates downstream signaling in proliferating cells. Contributes to clathrin-mediated endocytosis by regulating sorting of endocytosed receptors to early and recycling endosomes. The protein is Sialidase-3 (Neu3) of Rattus norvegicus (Rat).